Reading from the N-terminus, the 132-residue chain is Transcription antitermination protein NusB (132 aa).

The protein belongs to the NusB family.

Functionally, involved in transcription antitermination. Required for transcription of ribosomal RNA (rRNA) genes. Binds specifically to the boxA antiterminator sequence of the ribosomal RNA (rrn) operons. The sequence is that of Transcription antitermination protein NusB from Campylobacter lari (strain RM2100 / D67 / ATCC BAA-1060).